The primary structure comprises 118 residues: UPF0342 protein BCE_0953 (118 aa).

Belongs to the UPF0342 family.

This chain is UPF0342 protein BCE_0953, found in Bacillus cereus (strain ATCC 10987 / NRS 248).